We begin with the raw amino-acid sequence, 174 residues long: Large ribosomal subunit protein uL10 (174 aa).

Belongs to the universal ribosomal protein uL10 family. In terms of assembly, part of the ribosomal stalk of the 50S ribosomal subunit. The N-terminus interacts with L11 and the large rRNA to form the base of the stalk. The C-terminus forms an elongated spine to which L12 dimers bind in a sequential fashion forming a multimeric L10(L12)X complex.

In terms of biological role, forms part of the ribosomal stalk, playing a central role in the interaction of the ribosome with GTP-bound translation factors. This is Large ribosomal subunit protein uL10 from Rubrobacter xylanophilus (strain DSM 9941 / JCM 11954 / NBRC 16129 / PRD-1).